The sequence spans 91 residues: Non-specific lipid-transfer protein P3 (91 aa).

Cystine bridges form between Cys-3/Cys-50, Cys-13/Cys-27, Cys-28/Cys-73, and Cys-48/Cys-87.

It is found in the secreted. Its function is as follows. Plant non-specific lipid-transfer proteins transfer phospholipids as well as galactolipids across membranes. May play a role in wax or cutin deposition in the cell walls of expanding epidermal cells and certain secretory tissues. The polypeptide is Non-specific lipid-transfer protein P3 (Vitis sp. (Grape)).